We begin with the raw amino-acid sequence, 135 residues long: P2Y purinoceptor 4 (135 aa).

A helical transmembrane segment spans residues 1–25 (VHFSSSVMVLLFGLPFLVTLVCYGL). At 26-49 (MALRLCRPLPGAGQSSSRLRSLRT) the chain is on the cytoplasmic side. Residues 50–72 (IAVVMTVFAVCLVPFHITRTIYY) form a helical membrane-spanning segment. Topologically, residues 73-90 (LARLLKADCQILNIVNVV) are extracellular. The chain crosses the membrane as a helical span at residues 91-112 (YKVTRPLASANSCLDPLLYLFT). The Cytoplasmic portion of the chain corresponds to 113–135 (GDKYRHQLQRLCRVSAPQRRITA).

It belongs to the G-protein coupled receptor 1 family. In terms of tissue distribution, expressed in brain, heart, stria vascularis and vestibular labyrinth.

It localises to the cell membrane. Receptor for ATP and UTP coupled to G-proteins that activate a phosphatidylinositol-calcium second messenger system. Not activated by UDP. The protein is P2Y purinoceptor 4 (P2RY4) of Meriones unguiculatus (Mongolian jird).